We begin with the raw amino-acid sequence, 425 residues long: Glucan 1,3-beta-glucosidase (425 aa).

A signal peptide spans 1 to 19; sequence MNLTLLLLALIFSPSLIFS. The active-site Proton donor is the Glu219. Disulfide bonds link Cys301–Cys423 and Cys326–Cys352. Glu318 functions as the Nucleophile in the catalytic mechanism.

Belongs to the glycosyl hydrolase 5 (cellulase A) family.

It localises to the secreted. It catalyses the reaction Successive hydrolysis of beta-D-glucose units from the non-reducing ends of (1-&gt;3)-beta-D-glucans, releasing alpha-glucose.. Functionally, beta-glucanases participate in the metabolism of beta-glucan, the main structural component of the cell wall. It could also function biosynthetically as a transglycosylase. This chain is Glucan 1,3-beta-glucosidase, found in Schwanniomyces occidentalis (Yeast).